A 367-amino-acid chain; its full sequence is tRNA-specific 2-thiouridylase MnmA (367 aa).

Residues 10–17 and Met-36 contribute to the ATP site; that span reads AMSGGVDS. The active-site Nucleophile is the Cys-106. A disulfide bridge links Cys-106 with Cys-204. Gly-130 is a binding site for ATP. Residues 154–156 are interaction with tRNA; sequence KDQ. The active-site Cysteine persulfide intermediate is the Cys-204. Positions 310–311 are interaction with tRNA; the sequence is RY.

Belongs to the MnmA/TRMU family.

It localises to the cytoplasm. It catalyses the reaction S-sulfanyl-L-cysteinyl-[protein] + uridine(34) in tRNA + AH2 + ATP = 2-thiouridine(34) in tRNA + L-cysteinyl-[protein] + A + AMP + diphosphate + H(+). Its function is as follows. Catalyzes the 2-thiolation of uridine at the wobble position (U34) of tRNA, leading to the formation of s(2)U34. This chain is tRNA-specific 2-thiouridylase MnmA, found in Desulforamulus reducens (strain ATCC BAA-1160 / DSM 100696 / MI-1) (Desulfotomaculum reducens).